Reading from the N-terminus, the 222-residue chain is Adenylate kinase (222 aa).

10–15 contacts ATP; that stretch reads GAGKGT. The segment at 30–59 is NMP; the sequence is STGDMLRAAVKAGTPLGIEAKKVMDAGGLV. AMP contacts are provided by residues threonine 31, arginine 36, 57-59, 85-88, and glutamine 92; these read GLV and GFPR. The segment at 122–159 is LID; sequence GRRVHVASGRTYHVKYNPPKNEGQDDETGDPLIQRDDD. ATP-binding positions include arginine 123 and 132–133; that span reads TY. The interval 135 to 162 is disordered; that stretch reads VKYNPPKNEGQDDETGDPLIQRDDDKEE. AMP contacts are provided by arginine 156 and arginine 167. Position 207 (glycine 207) interacts with ATP.

The protein belongs to the adenylate kinase family. In terms of assembly, monomer.

The protein resides in the cytoplasm. The catalysed reaction is AMP + ATP = 2 ADP. Its pathway is purine metabolism; AMP biosynthesis via salvage pathway; AMP from ADP: step 1/1. Its function is as follows. Catalyzes the reversible transfer of the terminal phosphate group between ATP and AMP. Plays an important role in cellular energy homeostasis and in adenine nucleotide metabolism. In Ralstonia nicotianae (strain ATCC BAA-1114 / GMI1000) (Ralstonia solanacearum), this protein is Adenylate kinase.